A 320-amino-acid polypeptide reads, in one-letter code: ATP synthase gamma chain (320 aa).

This sequence belongs to the ATPase gamma chain family. As to quaternary structure, F-type ATPases have 2 components, CF(1) - the catalytic core - and CF(0) - the membrane proton channel. CF(1) has five subunits: alpha(3), beta(3), gamma(1), delta(1), epsilon(1). CF(0) has three main subunits: a, b and c.

Its subcellular location is the cell membrane. Its function is as follows. Produces ATP from ADP in the presence of a proton gradient across the membrane. The gamma chain is believed to be important in regulating ATPase activity and the flow of protons through the CF(0) complex. This Lactobacillus delbrueckii subsp. bulgaricus (strain ATCC 11842 / DSM 20081 / BCRC 10696 / JCM 1002 / NBRC 13953 / NCIMB 11778 / NCTC 12712 / WDCM 00102 / Lb 14) protein is ATP synthase gamma chain.